The sequence spans 673 residues: Forkhead box protein O3 (673 aa).

Residues 1 to 153 (MAEAPASPAP…SGQPRKCSSR (153 aa)) are disordered. Position 30 is a phosphoserine; by AMPK (Ser-30). Position 32 is a phosphothreonine; by PKB/AKT1 (Thr-32). Residue Lys-46 is modified to N6-methyllysine. Over residues 57–68 (IPEEEDDEDDED) the composition is skewed to acidic residues. Positions 79–89 (IGGGGGSGTLG) are enriched in gly residues. The segment at 80–108 (GGGGGSGTLGSGLLLEDSARVLAPGGQDP) is required for mitochondrial import. The residue at position 149 (Lys-149) is an N6-methyllysine. Residues 157 to 251 (WGNLSYADLI…KSGKAPRRRA (95 aa)) constitute a DNA-binding region (fork-head). At Thr-179 the chain carries Phosphothreonine; by AMPK. Ser-209 is modified (phosphoserine; by STK4/MST1). Ser-215 is modified (phosphoserine; by MAPKAPK5). The residue at position 230 (Lys-230) is an N6-methyllysine. Positions 231-302 (SSWWIINPDG…GSPTSRSSDE (72 aa)) are disordered. Lys-242 carries the N6-acetyllysine modification. Positions 242 to 259 (KSGKAPRRRAVSMDNSNK) match the Nuclear localization signal motif. Position 253 is a phosphoserine; by PKB/AKT1 and MAPKAPK5 (Ser-253). A compositionally biased stretch (basic residues) spans 261–272 (TKSRGRAAKKKA). An N6-methyllysine mark is found at Lys-262 and Lys-271. Phosphoserine occurs at positions 280 and 284. Positions 283–298 (DSPSQLSKWPGSPTSR) are enriched in polar residues. Lys-290 bears the N6-methyllysine mark. Ser-294 carries the phosphoserine modification. A Phosphoserine; by CaMK2A modification is found at Ser-299. The interval 300 to 673 (SDELDAWTDF…QASSQSWVPG (374 aa)) is mediates interaction with CHUK/IKKA and IKBKB/IKKB. A Phosphoserine modification is found at Ser-311. Ser-315 is subject to Phosphoserine; by SGK1. 2 positions are modified to phosphoserine; by AMPK: Ser-399 and Ser-413. N6-methyllysine is present on Lys-419. A Phosphoserine modification is found at Ser-421. The segment at 536 to 587 (HQHQTQGALGGSRALSNSVSNMGLSESSSLGSAKHQQQSPVSQSMQTLSDSL) is disordered. The span at 549–582 (ALSNSVSNMGLSESSSLGSAKHQQQSPVSQSMQT) shows a compositional bias: polar residues. A Phosphoserine; by MAPKAPK5 modification is found at Ser-551. Position 555 is a phosphoserine; by AMPK and MAPKAPK5 (Ser-555). Ser-588 and Ser-626 each carry phosphoserine; by AMPK. At Ser-644 the chain carries Phosphoserine; by IKKB.

As to quaternary structure, upon metabolic stress, forms a complex composed of FOXO3, SIRT3 and mitochondrial RNA polymerase POLRMT; the complex is recruited to mtDNA in a SIRT3-dependent manner. Also forms a complex composed of FOXO3, SIRT3, TFAM and POLRMT. Interacts with SIRT2; the interaction occurs independently of SIRT2 deacetylase activity. Interacts with YWHAB/14-3-3-beta and YWHAZ/14-3-3-zeta, which are required for cytosolic sequestration. Upon oxidative stress, interacts with STK4/MST1, which disrupts interaction with YWHAB/14-3-3-beta and leads to nuclear translocation. Interacts with PIM1. Interacts with DDIT3/CHOP. Interacts (deacetylated form) with SKP2. Interacts with CHUK and IKBKB. Interacts with CAMK2A, CAMK2B and calcineurin A. Interacts with NUPR1; this interaction represses FOXO3 transactivation. In the presence of survival factors such as IGF1, phosphorylated on Thr-32 and Ser-253 by AKT1/PKB. This phosphorylated form then interacts with 14-3-3 proteins and is retained in the cytoplasm. Survival factor withdrawal induces dephosphorylation and promotes translocation to the nucleus where the dephosphorylated protein induces transcription of target genes and triggers apoptosis. Although AKT1/PKB doesn't appear to phosphorylate Ser-315 directly, it may activate other kinases that trigger phosphorylation at this residue. Phosphorylated by STK4/MST1 on Ser-209 upon oxidative stress, which leads to dissociation from YWHAB/14-3-3-beta and nuclear translocation. Phosphorylated by PIM1. Phosphorylation by AMPK leads to the activation of transcriptional activity without affecting subcellular localization. In response to metabolic stress, phosphorylated by AMPK on Ser-30 which mediates FOXO3 mitochondrial translocation. Phosphorylation by MAPKAPK5 promotes nuclear localization and DNA-binding, leading to induction of miR-34b and miR-34c expression, 2 post-transcriptional regulators of MYC that bind to the 3'UTR of MYC transcript and prevent its translation. Phosphorylated by CHUK/IKKA and IKBKB/IKKB. TNF-induced inactivation of FOXO3 requires its phosphorylation at Ser-644 by IKBKB/IKKB which promotes FOXO3 retention in the cytoplasm, polyubiquitination and ubiquitin-mediated proteasomal degradation. May be dephosphorylated by calcineurin A on Ser-299 which abolishes FOXO3 transcriptional activity. In cancer cells, ERK mediated-phosphorylation of Ser-12 is required for mitochondrial translocation of FOXO3 in response to metabolic stress or chemotherapeutic agents. Phosphorylation at Ser-253 promotes its degradation by the proteasome. Dephosphorylation at Ser-253 by protein phosphatase 2A (PPP2CA) promotes its stabilization; interaction with PPP2CA is enhanced by AMBRA1. Post-translationally, deacetylation by SIRT1 or SIRT2 stimulates interaction of FOXO3 with SKP2 and facilitates SCF(SKP2)-mediated FOXO3 ubiquitination and proteasomal degradation. Deacetylation by SIRT2 stimulates FOXO3-mediated transcriptional activity in response to oxidative stress. Deacetylated by SIRT3. Deacetylation by SIRT3 stimulates FOXO3-mediated mtDNA transcriptional activity in response to metabolic stress. In terms of processing, heavily methylated by SET9 which decreases stability, while moderately increasing transcriptional activity. The main methylation site is Lys-271. Methylation doesn't affect subcellular location. Polyubiquitinated. Ubiquitinated by a SCF complex containing SKP2, leading to proteasomal degradation. Post-translationally, the N-terminus is cleaved following import into the mitochondrion. In terms of tissue distribution, ubiquitous.

It is found in the cytoplasm. The protein resides in the cytosol. It localises to the nucleus. Its subcellular location is the mitochondrion matrix. The protein localises to the mitochondrion outer membrane. Functionally, transcriptional activator that recognizes and binds to the DNA sequence 5'-[AG]TAAA[TC]A-3' and regulates different processes, such as apoptosis and autophagy. Acts as a positive regulator of autophagy in skeletal muscle: in starved cells, enters the nucleus following dephosphorylation and binds the promoters of autophagy genes, such as GABARAP1L, MAP1LC3B and ATG12, thereby activating their expression, resulting in proteolysis of skeletal muscle proteins. Triggers apoptosis in the absence of survival factors, including neuronal cell death upon oxidative stress. Participates in post-transcriptional regulation of MYC: following phosphorylation by MAPKAPK5, promotes induction of miR-34b and miR-34c expression, 2 post-transcriptional regulators of MYC that bind to the 3'UTR of MYC transcript and prevent its translation. In response to metabolic stress, translocates into the mitochondria where it promotes mtDNA transcription. In response to metabolic stress, translocates into the mitochondria where it promotes mtDNA transcription. Also acts as a key regulator of chondrogenic commitment of skeletal progenitor cells in response to lipid availability: when lipids levels are low, translocates to the nucleus and promotes expression of SOX9, which induces chondrogenic commitment and suppresses fatty acid oxidation. Also acts as a key regulator of regulatory T-cells (Treg) differentiation by activating expression of FOXP3. The sequence is that of Forkhead box protein O3 from Homo sapiens (Human).